Consider the following 349-residue polypeptide: Isopentenyl-diphosphate delta-isomerase (349 aa).

9–10 serves as a coordination point for substrate; sequence RK. FMN contacts are provided by residues 65-67, Ser-95, and Asn-124; that span reads AMT. 95–97 is a substrate binding site; it reads STH. Position 154 (Gln-154) interacts with substrate. Glu-155 contacts Mg(2+). FMN contacts are provided by residues Lys-186, Ser-211, Thr-216, 262–264, and 283–284; these read GVR and SR.

Belongs to the IPP isomerase type 2 family. Homooctamer. Dimer of tetramers. The cofactor is FMN. It depends on NADPH as a cofactor. Mg(2+) serves as cofactor.

The protein resides in the cytoplasm. The catalysed reaction is isopentenyl diphosphate = dimethylallyl diphosphate. In terms of biological role, involved in the biosynthesis of isoprenoids. Catalyzes the 1,3-allylic rearrangement of the homoallylic substrate isopentenyl (IPP) to its allylic isomer, dimethylallyl diphosphate (DMAPP). The polypeptide is Isopentenyl-diphosphate delta-isomerase (Staphylococcus haemolyticus (strain JCSC1435)).